The following is a 416-amino-acid chain: 2-aminoadipate transaminase (416 aa).

Pyridoxal 5'-phosphate-binding positions include 102 to 103 (GA) and Q233. K259 is subject to N6-(pyridoxal phosphate)lysine. Residue T288 coordinates pyridoxal 5'-phosphate.

This sequence belongs to the class-III pyridoxal-phosphate-dependent aminotransferase family. Pyridoxal 5'-phosphate is required as a cofactor.

It catalyses the reaction L-2-aminoadipate + 2-oxoglutarate = 2-oxoadipate + L-glutamate. The catalysed reaction is 5-aminopentanoate + 2-oxoglutarate = 5-oxopentanoate + L-glutamate. The protein operates within amino-acid degradation. Functionally, catalyzes the conversion of 2-aminoadipate (2AA) to 2-oxoadipate (2OA). Is most active on L-2-aminoadipate (L-2AA) and shows only weak activity on the enantiomer, D-2-aminoadipate (D-2AA). Shows moderate activity on 5-aminovalerate (5AVA) and weak activity toward 4-aminobutyrate (GABA). Is involved in a D-lysine catabolic pathway. This is 2-aminoadipate transaminase from Pseudomonas putida (strain ATCC 47054 / DSM 6125 / CFBP 8728 / NCIMB 11950 / KT2440).